The following is a 621-amino-acid chain: Putative DNA 3'-5' helicase Rad25 (621 aa).

Residues valine 268–isoleucine 417 form the Helicase ATP-binding domain. Glycine 281 to threonine 288 is an ATP binding site. A DEAH box motif is present at residues aspartate 371–histidine 374. The disordered stretch occupies residues proline 441–serine 465. The region spanning lysine 469–glutamate 621 is the Helicase C-terminal domain.

This sequence belongs to the helicase family. RAD25/XPB subfamily.

The catalysed reaction is Couples ATP hydrolysis with the unwinding of duplex DNA by translocating in the 3'-5' direction.. It catalyses the reaction ATP + H2O = ADP + phosphate + H(+). The protein is Putative DNA 3'-5' helicase Rad25 of Haloarcula marismortui (strain ATCC 43049 / DSM 3752 / JCM 8966 / VKM B-1809) (Halobacterium marismortui).